A 603-amino-acid chain; its full sequence is Elongation factor 4 (603 aa).

Residues 9–191 (SNIRNFSIIA…RIVRQIPPPK (183 aa)) enclose the tr-type G domain. Residues 21-26 (DHGKST) and 138-141 (NKID) contribute to the GTP site.

This sequence belongs to the TRAFAC class translation factor GTPase superfamily. Classic translation factor GTPase family. LepA subfamily.

It localises to the cell inner membrane. It catalyses the reaction GTP + H2O = GDP + phosphate + H(+). In terms of biological role, required for accurate and efficient protein synthesis under certain stress conditions. May act as a fidelity factor of the translation reaction, by catalyzing a one-codon backward translocation of tRNAs on improperly translocated ribosomes. Back-translocation proceeds from a post-translocation (POST) complex to a pre-translocation (PRE) complex, thus giving elongation factor G a second chance to translocate the tRNAs correctly. Binds to ribosomes in a GTP-dependent manner. In Idiomarina loihiensis (strain ATCC BAA-735 / DSM 15497 / L2-TR), this protein is Elongation factor 4.